Consider the following 339-residue polypeptide: D-erythrose-4-phosphate dehydrogenase (339 aa).

Arginine 11–isoleucine 12 contributes to the NAD(+) binding site. Residues serine 153 to threonine 155, arginine 199, threonine 212 to lysine 213, and arginine 235 contribute to the substrate site. Cysteine 154 functions as the Nucleophile in the catalytic mechanism. An NAD(+)-binding site is contributed by asparagine 317.

This sequence belongs to the glyceraldehyde-3-phosphate dehydrogenase family. Epd subfamily. Homotetramer.

It is found in the cytoplasm. The enzyme catalyses D-erythrose 4-phosphate + NAD(+) + H2O = 4-phospho-D-erythronate + NADH + 2 H(+). The protein operates within cofactor biosynthesis; pyridoxine 5'-phosphate biosynthesis; pyridoxine 5'-phosphate from D-erythrose 4-phosphate: step 1/5. Functionally, catalyzes the NAD-dependent conversion of D-erythrose 4-phosphate to 4-phosphoerythronate. The polypeptide is D-erythrose-4-phosphate dehydrogenase (Shewanella pealeana (strain ATCC 700345 / ANG-SQ1)).